Consider the following 444-residue polypeptide: MARISCDLRFLLIPAAFMFIYIQMRLFQTQSQYADRLSSAIESENHCTSQMRGLIDEVSIKQSRIVALEDMKNRQDEELVQLKDLIQTFEKKGIAKLTQGGQMPVAAVVVMACSRADYLERTVKSVLTYQTPVASKYPLFISQDGSDQAVKSKSLSYNQLTYMQHLDFEPVVTERPGELTAYYKIARHYKWALDQLFYKHKFSRVIILEDDMEIAPDFFDYFEAAASLMDRDKTIMAASSWNDNGQKQFVHDPYALYRSDFFPGLGWMLKRSTWDELSPKWPKAYWDDWLRLKENHKGRQFIRPEVCRTYNFGEHGSSLGQFFSQYLEPIKLNDVTVDWKAKDLGYLTEGNYTKYFSGLVRQARPIQGSDLVLKAQNIKDDVRIRYKDQVEFERIAGEFGIFEEWKDGVPRTAYKGVVVFRIQTTRRVFLVGPDSVMQLGIRNS.

Topologically, residues M1–C6 are cytoplasmic. A helical; Signal-anchor for type II membrane protein transmembrane segment spans residues D7–M24. Over R25 to S444 the chain is Lumenal. A coiled-coil region spans residues K61–K92. Residues R115, D144, H188, and D210 each coordinate substrate. A Mn(2+)-binding site is contributed by D211. D287 functions as the Proton acceptor in the catalytic mechanism. S318 provides a ligand contact to substrate. A glycan (N-linked (GlcNAc...) asparagine) is linked at N351.

The protein belongs to the glycosyltransferase 13 family. Requires Mn(2+) as cofactor. In terms of processing, glycosylated. Expressed in roots, stems, leaves and flowers.

Its subcellular location is the golgi apparatus membrane. The enzyme catalyses N(4)-(alpha-D-Man-(1-&gt;3)-[alpha-D-Man-(1-&gt;3)-[alpha-D-Man-(1-&gt;6)]-alpha-D-Man-(1-&gt;6)]-beta-D-Man-(1-&gt;4)-beta-D-GlcNAc-(1-&gt;4)-beta-D-GlcNAc)-L-asparaginyl-[protein] (N-glucan mannose isomer 5A1,2) + UDP-N-acetyl-alpha-D-glucosamine = N(4)-{beta-D-GlcNAc-(1-&gt;2)-alpha-D-Man-(1-&gt;3)-[alpha-D-Man-(1-&gt;3)-[alpha-D-Man-(1-&gt;6)]-alpha-D-Man-(1-&gt;6)]-beta-D-Man-(1-&gt;4)-beta-D-GlcNAc-(1-&gt;4)-beta-D-GlcNAc}-L-asparaginyl-[protein] + UDP + H(+). It functions in the pathway protein modification; protein glycosylation. Initiates complex N-linked carbohydrate formation. Essential for the conversion of high-mannose to hybrid and complex N-glycans. Required for normal root growth and morphology. This Arabidopsis thaliana (Mouse-ear cress) protein is Alpha-1,3-mannosyl-glycoprotein 2-beta-N-acetylglucosaminyltransferase.